A 292-amino-acid chain; its full sequence is HTH-type transcriptional regulator BlaA (292 aa).

Residues L5 to T62 enclose the HTH lysR-type domain. The segment at residues F22 to R41 is a DNA-binding region (H-T-H motif).

The protein belongs to the LysR transcriptional regulatory family.

Its function is as follows. Positive regulator of the expression of the gene (blaB) for beta-lactamase. The sequence is that of HTH-type transcriptional regulator BlaA (blaA) from Proteus vulgaris.